The sequence spans 246 residues: Probable transcriptional regulatory protein CLK_2466 (246 aa).

This sequence belongs to the TACO1 family.

It is found in the cytoplasm. The protein is Probable transcriptional regulatory protein CLK_2466 of Clostridium botulinum (strain Loch Maree / Type A3).